Consider the following 180-residue polypeptide: MLVVGRIGKPHGIRGEVTVEVRTDEPETRFAPGSVLRTEPGANVPAHPGAYRVPGELTVEAARWHQGRVLLVTFEGVLDRNVAEALRGTLVGVDRADVAPPTDPEEFHDHQLVGLAVVTSAGERLGEIARIDHAPAADLLVLRRPGRRDVLIPFVQAIVPEIDLAGGRVVVDPPGGLLDL.

One can recognise a PRC barrel domain in the interval 104 to 177 (PEEFHDHQLV…RVVVDPPGGL (74 aa)).

This sequence belongs to the RimM family. As to quaternary structure, binds ribosomal protein uS19.

It localises to the cytoplasm. An accessory protein needed during the final step in the assembly of 30S ribosomal subunit, possibly for assembly of the head region. Essential for efficient processing of 16S rRNA. May be needed both before and after RbfA during the maturation of 16S rRNA. It has affinity for free ribosomal 30S subunits but not for 70S ribosomes. In Salinispora tropica (strain ATCC BAA-916 / DSM 44818 / JCM 13857 / NBRC 105044 / CNB-440), this protein is Ribosome maturation factor RimM.